The sequence spans 33 residues: NAD-reducing hydrogenase HoxS subunit gamma (33 aa).

A 2Fe-2S ferredoxin-type domain is found at 1–33 (SIEIEIDGVTVTTEESRTLVDVAAEAGVYIPTL).

This sequence belongs to the complex I 75 kDa subunit family. In terms of assembly, tetramer of an alpha and a gamma subunits (flavin-containing dimer), and a delta and a nickel-containing beta subunits (hydrogenase dimer). It depends on [4Fe-4S] cluster as a cofactor.

It is found in the cytoplasm. It carries out the reaction H2 + NAD(+) = NADH + H(+). Functionally, subunits alpha and gamma of HoxS constitute an NADH--oxidoreductase. The polypeptide is NAD-reducing hydrogenase HoxS subunit gamma (hoxU) (Rhodococcus opacus (Nocardia opaca)).